The primary structure comprises 333 residues: Glyceraldehyde-3-phosphate dehydrogenase (333 aa).

NAD(+) contacts are provided by residues 12–13, aspartate 36, arginine 80, and serine 120; that span reads RI. D-glyceraldehyde 3-phosphate is bound by residues 150–152, threonine 181, arginine 196, 209–210, and arginine 232; these read SCT and TG. Residue cysteine 151 is the Nucleophile of the active site. Position 314 (asparagine 314) interacts with NAD(+).

The protein belongs to the glyceraldehyde-3-phosphate dehydrogenase family. Homotetramer.

The protein localises to the cytoplasm. It carries out the reaction D-glyceraldehyde 3-phosphate + phosphate + NAD(+) = (2R)-3-phospho-glyceroyl phosphate + NADH + H(+). It functions in the pathway carbohydrate degradation; glycolysis; pyruvate from D-glyceraldehyde 3-phosphate: step 1/5. Catalyzes the oxidative phosphorylation of glyceraldehyde 3-phosphate (G3P) to 1,3-bisphosphoglycerate (BPG) using the cofactor NAD. The first reaction step involves the formation of a hemiacetal intermediate between G3P and a cysteine residue, and this hemiacetal intermediate is then oxidized to a thioester, with concomitant reduction of NAD to NADH. The reduced NADH is then exchanged with the second NAD, and the thioester is attacked by a nucleophilic inorganic phosphate to produce BPG. The sequence is that of Glyceraldehyde-3-phosphate dehydrogenase (gapB) from Cereibacter sphaeroides (Rhodobacter sphaeroides).